The primary structure comprises 370 residues: sn-glycerol-3-phosphate import ATP-binding protein UgpC (370 aa).

The ABC transporter domain maps to 4-236; sequence LSLKNIAKRY…PATAFVAAFM (233 aa). Residue 38–45 participates in ATP binding; sequence GPSGCGKS.

Belongs to the ABC transporter superfamily. sn-glycerol-3-phosphate importer (TC 3.A.1.1.3) family. As to quaternary structure, the complex is composed of two ATP-binding proteins (UgpC), two transmembrane proteins (UgpA and UgpE) and a solute-binding protein (UgpB).

It localises to the cell inner membrane. The enzyme catalyses sn-glycerol 3-phosphate(out) + ATP + H2O = sn-glycerol 3-phosphate(in) + ADP + phosphate + H(+). Part of the ABC transporter complex UgpBAEC involved in sn-glycerol-3-phosphate (G3P) import. Responsible for energy coupling to the transport system. This is sn-glycerol-3-phosphate import ATP-binding protein UgpC from Chromobacterium violaceum (strain ATCC 12472 / DSM 30191 / JCM 1249 / CCUG 213 / NBRC 12614 / NCIMB 9131 / NCTC 9757 / MK).